The following is a 338-amino-acid chain: Nicotinate-nucleotide--dimethylbenzimidazole phosphoribosyltransferase (338 aa).

Glutamate 305 serves as the catalytic Proton acceptor.

It belongs to the CobT family.

It catalyses the reaction 5,6-dimethylbenzimidazole + nicotinate beta-D-ribonucleotide = alpha-ribazole 5'-phosphate + nicotinate + H(+). The protein operates within nucleoside biosynthesis; alpha-ribazole biosynthesis; alpha-ribazole from 5,6-dimethylbenzimidazole: step 1/2. Functionally, catalyzes the synthesis of alpha-ribazole-5'-phosphate from nicotinate mononucleotide (NAMN) and 5,6-dimethylbenzimidazole (DMB). In Novosphingobium aromaticivorans (strain ATCC 700278 / DSM 12444 / CCUG 56034 / CIP 105152 / NBRC 16084 / F199), this protein is Nicotinate-nucleotide--dimethylbenzimidazole phosphoribosyltransferase.